Here is a 370-residue protein sequence, read N- to C-terminus: Queuine tRNA-ribosyltransferase (370 aa).

The Proton acceptor role is filled by Asp89. Substrate is bound by residues 89-93, Asp143, and Gly214; that span reads DSGGF. The segment at 245–251 is RNA binding; the sequence is GVGKPED. The active-site Nucleophile is Asp264. Positions 269 to 273 are RNA binding; important for wobble base 34 recognition; that stretch reads TRNAR. Positions 302, 304, 307, and 333 each coordinate Zn(2+).

It belongs to the queuine tRNA-ribosyltransferase family. In terms of assembly, homodimer. Within each dimer, one monomer is responsible for RNA recognition and catalysis, while the other monomer binds to the replacement base PreQ1. The cofactor is Zn(2+).

It catalyses the reaction 7-aminomethyl-7-carbaguanine + guanosine(34) in tRNA = 7-aminomethyl-7-carbaguanosine(34) in tRNA + guanine. It functions in the pathway tRNA modification; tRNA-queuosine biosynthesis. Functionally, catalyzes the base-exchange of a guanine (G) residue with the queuine precursor 7-aminomethyl-7-deazaguanine (PreQ1) at position 34 (anticodon wobble position) in tRNAs with GU(N) anticodons (tRNA-Asp, -Asn, -His and -Tyr). Catalysis occurs through a double-displacement mechanism. The nucleophile active site attacks the C1' of nucleotide 34 to detach the guanine base from the RNA, forming a covalent enzyme-RNA intermediate. The proton acceptor active site deprotonates the incoming PreQ1, allowing a nucleophilic attack on the C1' of the ribose to form the product. After dissociation, two additional enzymatic reactions on the tRNA convert PreQ1 to queuine (Q), resulting in the hypermodified nucleoside queuosine (7-(((4,5-cis-dihydroxy-2-cyclopenten-1-yl)amino)methyl)-7-deazaguanosine). The sequence is that of Queuine tRNA-ribosyltransferase from Buchnera aphidicola subsp. Acyrthosiphon pisum (strain APS) (Acyrthosiphon pisum symbiotic bacterium).